We begin with the raw amino-acid sequence, 159 residues long: Ribosomal RNA large subunit methyltransferase H (159 aa).

S-adenosyl-L-methionine-binding positions include Leu76, Gly108, and 127 to 132 (FGRLTL).

It belongs to the RNA methyltransferase RlmH family. As to quaternary structure, homodimer.

The protein resides in the cytoplasm. The enzyme catalyses pseudouridine(1915) in 23S rRNA + S-adenosyl-L-methionine = N(3)-methylpseudouridine(1915) in 23S rRNA + S-adenosyl-L-homocysteine + H(+). Functionally, specifically methylates the pseudouridine at position 1915 (m3Psi1915) in 23S rRNA. This Streptococcus pneumoniae (strain 70585) protein is Ribosomal RNA large subunit methyltransferase H.